The following is a 160-amino-acid chain: Cytochrome c-type biogenesis protein CcmE (160 aa).

The Cytoplasmic segment spans residues 1–8; that stretch reads MNPRRKQR. The chain crosses the membrane as a helical; Signal-anchor for type II membrane protein span at residues 9–29; the sequence is LTWVAILVIGVSVATGLMLYA. Topologically, residues 30 to 160 are periplasmic; that stretch reads LSQSIDLFYT…PNTVEKGEGQ (131 aa). Residues H130 and Y134 each coordinate heme.

This sequence belongs to the CcmE/CycJ family.

The protein resides in the cell inner membrane. Its function is as follows. Heme chaperone required for the biogenesis of c-type cytochromes. Transiently binds heme delivered by CcmC and transfers the heme to apo-cytochromes in a process facilitated by CcmF and CcmH. The protein is Cytochrome c-type biogenesis protein CcmE of Idiomarina loihiensis (strain ATCC BAA-735 / DSM 15497 / L2-TR).